Here is a 456-residue protein sequence, read N- to C-terminus: Glutamate--tRNA ligase 1 (456 aa).

Residues 9-19 (PSPTGQIHIGN) carry the 'HIGH' region motif. The short motif at 250–254 (GLSKR) is the 'KMSKS' region element. Lys253 provides a ligand contact to ATP.

Belongs to the class-I aminoacyl-tRNA synthetase family. Glutamate--tRNA ligase type 1 subfamily. As to quaternary structure, monomer.

It localises to the cytoplasm. It carries out the reaction tRNA(Glu) + L-glutamate + ATP = L-glutamyl-tRNA(Glu) + AMP + diphosphate. Functionally, catalyzes the attachment of glutamate to tRNA(Glu) in a two-step reaction: glutamate is first activated by ATP to form Glu-AMP and then transferred to the acceptor end of tRNA(Glu). The polypeptide is Glutamate--tRNA ligase 1 (Chelativorans sp. (strain BNC1)).